Reading from the N-terminus, the 1031-residue chain is MLKIIAKIFGSKHEKDIKKIQPIVDRINEIYGTLNALPDEAFRNKGVELRKKVRDKLIPFETKIKETEHKLERPDMSHEEHEKLNIELEQLRNKYEEATAAILDEVLPETFALVKETCRRLKGHTYTVMGHEMVWDMVPYDVQLIGGIVLHQGKIAEMATGEGKTLVSTLPVFLNALTGRGVHVVTVNEYLAQRDMEWMRPVYEYHGLSTGVILAGLYSNQRRNAYLCDITWGTNSEFGFDYLRDNMAGSEEEMVQRDFYFAIVDEVDSVLIDEARTPLIISGPVPNSDTDTKYREIKPWIEQLVRAQQNLVATLLDQAEKTLKEKPNDFDAGLALLRVKRGQPKNKRFIKMLSQPGIGKLVQSVENEYLKDNSSRMHEVDDELFYAVDEKANTIDLTEKGREFLGKLSHQDQDLFLLPDVGSEIAAIEADKNLQPTDKIRKKDEVYRLYSERSDSLHTIGQLLKAYTLFAKDDEYVVQNGQVMIVDEFTGRVLAGRRYSDGLHQAIEAKENVKIEGETQTMATITIQNYFRLYSKLAGMTGTAETEASEFFEIYKLDVVVIPTNHPIARHDQDDLVYKTRREKYNAIVNKVQELNAKGQPVLVGTASVEVSETLSRMLRAKRIQHNVLNAKQHAREAEIVAMAGQKGAVTIATNMAGRGTDIKLGPGVREMGGLFILGSERHESRRIDRQLRGRAGRQGDPGESIFYVSLEDDLMRLFGSDRVIAVMDKLGHEEGDVIEHSMITKSIERAQKKVEEQNFAIRKRLLEYDDVMNQQREVIYTRRRKALKMGRLKNDIMDLLQDYCYTVAKKFHESNDPAGLEEQVLRELSVEFHVEASAFEREPFEQTAEALYKAASEFYHRKENSLPDEIMQQIEKYAVLSVIDQKWREHLREIDSLREGINLRAYGQKDPLLEYKQEAYKLFVELLREIEHETLSVAFRLFPVSQDESEEIEARQRRQAVRQERLVAQHAEAESTYKIAADGGMNATLWMPGDEIVVQQPVRTEKKPGRNDDCPCGSGKKYKNCCGANE.

ATP is bound by residues Q143, G161–T165, and D662. Zn(2+) contacts are provided by C1015, C1017, C1026, and C1027.

Belongs to the SecA family. Monomer and homodimer. Part of the essential Sec protein translocation apparatus which comprises SecA, SecYEG and auxiliary proteins SecDF. Other proteins may also be involved. Requires Zn(2+) as cofactor.

The protein resides in the cell inner membrane. It is found in the cytoplasm. It catalyses the reaction ATP + H2O + cellular proteinSide 1 = ADP + phosphate + cellular proteinSide 2.. Part of the Sec protein translocase complex. Interacts with the SecYEG preprotein conducting channel. Has a central role in coupling the hydrolysis of ATP to the transfer of proteins into and across the cell membrane, serving as an ATP-driven molecular motor driving the stepwise translocation of polypeptide chains across the membrane. The chain is Protein translocase subunit SecA from Chlorobaculum tepidum (strain ATCC 49652 / DSM 12025 / NBRC 103806 / TLS) (Chlorobium tepidum).